A 269-amino-acid chain; its full sequence is MPELPEVETSRRGIEPHLVGATILHAHIRNGRLRWPVSDEIYRLSDTPVLSVQRRAKYLLLELPDGWIIIHLGMSGSLRILSEALPAEKHDHVDLVMSNGKILRYTDPRRFGAWLWTKELEGHNVLAHLGPEPLSDEFNGEYLQQKCAKKKTAIKPWLMDNKLVVGVGNIYASESLFAAGIHPDRLASSLSTAECDLLAQVIKAVLLRSIEQGGTTLKDFLQSDGKPGYFAQELQVYGRKGEPCRVCGTPIVATKHAQRATFYCRHCQK.

Pro2 (schiff-base intermediate with DNA) is an active-site residue. Glu3 (proton donor) is an active-site residue. The active-site Proton donor; for beta-elimination activity is Lys57. The DNA site is built by His90, Arg109, and Lys150. An FPG-type zinc finger spans residues 235–269; the sequence is QVYGRKGEPCRVCGTPIVATKHAQRATFYCRHCQK. The active-site Proton donor; for delta-elimination activity is Arg259.

This sequence belongs to the FPG family. In terms of assembly, monomer. It depends on Zn(2+) as a cofactor.

It catalyses the reaction Hydrolysis of DNA containing ring-opened 7-methylguanine residues, releasing 2,6-diamino-4-hydroxy-5-(N-methyl)formamidopyrimidine.. The catalysed reaction is 2'-deoxyribonucleotide-(2'-deoxyribose 5'-phosphate)-2'-deoxyribonucleotide-DNA = a 3'-end 2'-deoxyribonucleotide-(2,3-dehydro-2,3-deoxyribose 5'-phosphate)-DNA + a 5'-end 5'-phospho-2'-deoxyribonucleoside-DNA + H(+). In terms of biological role, involved in base excision repair of DNA damaged by oxidation or by mutagenic agents. Acts as a DNA glycosylase that recognizes and removes damaged bases. Has a preference for oxidized purines, such as 7,8-dihydro-8-oxoguanine (8-oxoG). Has AP (apurinic/apyrimidinic) lyase activity and introduces nicks in the DNA strand. Cleaves the DNA backbone by beta-delta elimination to generate a single-strand break at the site of the removed base with both 3'- and 5'-phosphates. The protein is Formamidopyrimidine-DNA glycosylase of Salmonella newport (strain SL254).